Here is a 314-residue protein sequence, read N- to C-terminus: uncharacterized protein (314 aa).

The transit peptide at 1–29 directs the protein to the mitochondrion; the sequence is MMRLIRTLPLRCFKTRIRRQGSLLCLRCF. The segment at 52-74 is disordered; the sequence is SSSPLSKNKEKQEKPEKENEGKH. Residues 58–74 show a composition bias toward basic and acidic residues; the sequence is KNKEKQEKPEKENEGKH. Residues 177–207 adopt a coiled-coil conformation; it reads LNEHHLQLLKLKRELNSIHDELNEIIIDLLQ. A helical membrane pass occupies residues 262 to 279; that stretch reads GLLVILVLVCSIMIGVSA. A disordered region spans residues 281 to 314; the sequence is KKERPGLQEPEEPEILAPKEDIDTTFPQDQHDID.

It is found in the mitochondrion membrane. This is an uncharacterized protein from Saccharomyces cerevisiae (strain ATCC 204508 / S288c) (Baker's yeast).